A 294-amino-acid chain; its full sequence is Cytidine deaminase (294 aa).

CMP/dCMP-type deaminase domains are found at residues 48–168 (DEDA…FGPK) and 186–294 (LTGD…VLLA). 89–91 (NME) is a binding site for substrate. Zn(2+) is bound at residue His-102. Glu-104 acts as the Proton donor in catalysis. Zn(2+) is bound by residues Cys-129 and Cys-132.

The protein belongs to the cytidine and deoxycytidylate deaminase family. In terms of assembly, homodimer. The cofactor is Zn(2+).

The catalysed reaction is cytidine + H2O + H(+) = uridine + NH4(+). It catalyses the reaction 2'-deoxycytidine + H2O + H(+) = 2'-deoxyuridine + NH4(+). This enzyme scavenges exogenous and endogenous cytidine and 2'-deoxycytidine for UMP synthesis. The polypeptide is Cytidine deaminase (Shigella dysenteriae serotype 1 (strain Sd197)).